The chain runs to 633 residues: Shootin-1 (633 aa).

M1 is modified (N-acetylmethionine). Phosphoserine is present on residues S3 and S4. Residues E7–P353 are a coiled coil. Phosphoserine; by PAK1 is present on residues S101 and S249. The segment at K343–P508 is disordered. Pro residues predominate over residues V352 to P369. S375 is modified (phosphoserine). Over residues T403–K418 the composition is skewed to basic and acidic residues. Polar residues predominate over residues L456–L465. S473 carries the phosphoserine modification. A Phosphothreonine modification is found at T487. Polar residues predominate over residues A490 to K505. S494 is modified (phosphoserine). Position 496 is a phosphothreonine (T496). S506 and S515 each carry phosphoserine. Residues T525–C633 are disordered. At T537 the chain carries Phosphothreonine. The span at C550–P559 shows a compositional bias: polar residues. Basic and acidic residues predominate over residues P590–S621.

The protein belongs to the shootin family. As to quaternary structure, interacts with PFN2. Interacts (via N-terminus) with KIF20B; this interaction is direct and promotes the association of SHTN1 to microtubules in primary neurons. Associates with microtubule. Interacts with L1CAM; this interaction occurs in axonal growth cones. Interacts with actin filament retrograde flow; this interaction is enhanced in a netrin-1- and PAK1-dependent manner and promotes F-actin-substrate coupling and concomitant formation of traction forces at axonal growth cones. Interacts with RUFY3. Phosphorylated on Ser-101 and Ser-249 by PAK1 through a CDC42- and RAC1-dependent signaling pathway, which enhances its association with F-actin retrograde flow in filopodia and lamellipodia of axonal growth cones. Phosphorylation on Ser-101 and Ser-249 is increased by netrin-1. Brain-specific (at protein level). Expressed in hippocampal neurons.

The protein resides in the perikaryon. It localises to the cell projection. It is found in the axon. The protein localises to the growth cone. Its subcellular location is the cytoplasm. The protein resides in the cytoskeleton. It localises to the filopodium. It is found in the lamellipodium. In terms of biological role, involved in the generation of internal asymmetric signals required for neuronal polarization and neurite outgrowth. Mediates netrin-1-induced F-actin-substrate coupling or 'clutch engagement' within the axon growth cone through activation of CDC42, RAC1 and PAK1-dependent signaling pathway, thereby converting the F-actin retrograde flow into traction forces, concomitantly with filopodium extension and axon outgrowth. Plays a role in cytoskeletal organization by regulating the subcellular localization of phosphoinositide 3-kinase (PI3K) activity at the axonal growth cone. Also plays a role in regenerative neurite outgrowth. In the developing cortex, cooperates with KIF20B to promote both the transition from the multipolar to the bipolar stage and the radial migration of cortical neurons from the ventricular zone toward the superficial layer of the neocortex. Involved in the accumulation of phosphatidylinositol 3,4,5-trisphosphate (PIP3) in the growth cone of primary hippocampal neurons. The sequence is that of Shootin-1 from Rattus norvegicus (Rat).